A 545-amino-acid chain; its full sequence is Tripartite motif-containing 55 (545 aa).

Residues 26–82 (CPICLEMFTKPVVILPCQHNLCRKCASDIFQASNPYLPTRGGTTVASGGRFRCPSCR) form an RING-type zinc finger. The B box-type zinc-finger motif lies at 119-161 (LDQPMCEEHEEERINIYCLNCEVPTCSLCKVFGAHKDCQVAPL). C124, H127, C147, and H153 together coordinate Zn(2+). Positions 269-327 (MDEPEMAVFLQNAKTLLQKIVEASKAFQMEKLEQGYEIMSNFTVNLNREEKIIREIDFS) constitute a COS domain. 3 disordered regions span residues 324–352 (IDFS…VEVE), 359–378 (IASS…SQLP), and 417–532 (SQQT…EPAR). Acidic residues predominate over residues 328–352 (REEEEEEDAGEIDEEGEGEDAVEVE). Residues 417–428 (SQQTTQSETSGP) are compositionally biased toward polar residues. Low complexity predominate over residues 474–485 (SSVQSAEVAEAA). Over residues 486 to 506 (TNEQAAVSGKESSSTAATSQI) the composition is skewed to polar residues.

Targeted for degradation through the proteasomal and lysosomal pathways in the presence of SUMO3. Widely expressed in various tissues, besides skeletal muscle and heart, such as brain, lung, liver, spleen and kidney.

It is found in the nucleus. It localises to the cytoplasm. The catalysed reaction is S-ubiquitinyl-[E2 ubiquitin-conjugating enzyme]-L-cysteine + [acceptor protein]-L-lysine = [E2 ubiquitin-conjugating enzyme]-L-cysteine + N(6)-ubiquitinyl-[acceptor protein]-L-lysine.. In terms of biological role, E3 ubiquitin ligase that plays an important role in regulating cardiac development and contractility, muscle growth, metabolism, and fiber-type differentiation. Acts as a critical factor that regulates cardiomyocyte size during development in concert with TRIM63 by regulating E2F1-mediated gene expression. Plays a role in apoptosis induction in cardiomyocytes by promoting ubiquitination of the DUSP1 phosphatase. Promotes non-canonical NF-kappa-B signaling and B-cell-mediated immune responses by mediating NFKB2 'Lys-48'-linked ubiquitination and processing. In turn, NFKB2 is further processed by valosin-containing protein/VCP, an ATPase that mediates ubiquitin-dependent protein degradation by the proteasome. May play a role in preventing macrophages from producing inflammatory factors and migrating by downregulating the level of nuclear NF-kappa-B subunit RELA. Modifies also PPARG via polyubiquitination and accelerates PPARG proteasomal degradation to inhibit its activity. The sequence is that of Tripartite motif-containing 55 (Trim55) from Mus musculus (Mouse).